Consider the following 451-residue polypeptide: Crh-like protein 2 (451 aa).

An N-terminal signal peptide occupies residues 1–21 (MQFNSLVLLAGATILSPFVQA). The GH16 domain occupies 22 to 241 (QTWTTCNPLN…FTKVPFTMYV (220 aa)). The cysteines at positions 27 and 34 are disulfide-linked. Residues asparagine 31, asparagine 43, asparagine 49, and asparagine 59 are each glycosylated (N-linked (GlcNAc...) asparagine). Glutamate 121 functions as the Nucleophile in the catalytic mechanism. Catalysis depends on glutamate 125, which acts as the Proton donor. A chitin-binding site is contributed by glutamate 125. Asparagine 130, asparagine 143, and asparagine 165 each carry an N-linked (GlcNAc...) asparagine glycan. Chitin contacts are provided by arginine 206, tryptophan 210, and threonine 222. Residue asparagine 273 is glycosylated (N-linked (GlcNAc...) asparagine). Residues 305–325 (VYCGGGAAVAALVSAFLFTFL) traverse the membrane as a helical segment. Asparagine 366 is a glycosylation site (N-linked (GlcNAc...) asparagine).

It belongs to the glycosyl hydrolase 16 family. CRH1 subfamily. As to quaternary structure, forms homodimers as well as heterodimers with other crh protein members crh1 and crh3. Dimerization may be necessary for the transglycosylation activity.

The protein localises to the membrane. It catalyses the reaction Random endo-hydrolysis of N-acetyl-beta-D-glucosaminide (1-&gt;4)-beta-linkages in chitin and chitodextrins.. Dual chitinase/transglycosylase that plays a role in cell wall architecture. Chitinase and transglycosylase activities are coupled. Required for the polysaccharide cross-linking at the septa and the cell wall. More specifically, transfers chitin to 1,6-beta-glucan in the cell wall. The protein is Crh-like protein 2 of Botryotinia fuckeliana (strain B05.10) (Noble rot fungus).